The chain runs to 264 residues: Glutamate racemase (264 aa).

Substrate-binding positions include 10-11 (DS) and 42-43 (YG). Catalysis depends on Cys73, which acts as the Proton donor/acceptor. 74–75 (NT) provides a ligand contact to substrate. The active-site Proton donor/acceptor is Cys183. A substrate-binding site is contributed by 184–185 (TH).

This sequence belongs to the aspartate/glutamate racemases family.

The enzyme catalyses L-glutamate = D-glutamate. Its pathway is cell wall biogenesis; peptidoglycan biosynthesis. Functionally, provides the (R)-glutamate required for cell wall biosynthesis. The sequence is that of Glutamate racemase from Streptococcus pyogenes serotype M3 (strain ATCC BAA-595 / MGAS315).